The primary structure comprises 1099 residues: Exonuclease/helicase subunit RexB (1099 aa).

Residues C766, C1056, C1059, and C1065 each contribute to the [4Fe-4S] cluster site.

This sequence belongs to the helicase family. AddB/RexB type 2 subfamily. Heterodimer of RexA (AddA) and RexB. It depends on Mg(2+) as a cofactor. [4Fe-4S] cluster is required as a cofactor.

Functionally, the heterodimer acts both as an ATP-dependent DNA helicase and an ATP-dependent, dual-direction single-stranded exonuclease. Recognizes the L.lactis chi site (5'-GCGCGTG-3'), which stimulates homologous recombination. This subunit has 5'-&gt;3' exonuclease activity. The heterodimer acts as both an ATP-dependent DNA helicase and an ATP-dependent, dual-direction single-stranded exonuclease. Recognizes the chi site generating a DNA molecule suitable for the initiation of homologous recombination. This subunit has 5' -&gt; 3' nuclease activity but not helicase activity. This chain is Exonuclease/helicase subunit RexB, found in Lactococcus lactis subsp. cremoris (strain MG1363).